The chain runs to 495 residues: UDP-N-acetylmuramoyl-L-alanyl-D-glutamate--2,6-diaminopimelate ligase (495 aa).

UDP-N-acetyl-alpha-D-muramoyl-L-alanyl-D-glutamate is bound by residues Leu27, Ser29, and 44-46 (HQA). 116–122 (GTNGKTT) serves as a coordination point for ATP. Residues Asn157, 158-159 (TT), Ser185, Gln191, and Arg193 contribute to the UDP-N-acetyl-alpha-D-muramoyl-L-alanyl-D-glutamate site. At Lys225 the chain carries N6-carboxylysine. Residues Arg390, 414–417 (DNPR), Gly465, and Glu469 each bind meso-2,6-diaminopimelate. The Meso-diaminopimelate recognition motif signature appears at 414–417 (DNPR).

The protein belongs to the MurCDEF family. MurE subfamily. Requires Mg(2+) as cofactor. Post-translationally, carboxylation is probably crucial for Mg(2+) binding and, consequently, for the gamma-phosphate positioning of ATP.

It localises to the cytoplasm. The enzyme catalyses UDP-N-acetyl-alpha-D-muramoyl-L-alanyl-D-glutamate + meso-2,6-diaminopimelate + ATP = UDP-N-acetyl-alpha-D-muramoyl-L-alanyl-gamma-D-glutamyl-meso-2,6-diaminopimelate + ADP + phosphate + H(+). It functions in the pathway cell wall biogenesis; peptidoglycan biosynthesis. Catalyzes the addition of meso-diaminopimelic acid to the nucleotide precursor UDP-N-acetylmuramoyl-L-alanyl-D-glutamate (UMAG) in the biosynthesis of bacterial cell-wall peptidoglycan. The chain is UDP-N-acetylmuramoyl-L-alanyl-D-glutamate--2,6-diaminopimelate ligase from Escherichia coli O6:H1 (strain CFT073 / ATCC 700928 / UPEC).